The primary structure comprises 1856 residues: Golgi-specific brefeldin A-resistance guanine nucleotide exchange factor 1 (1856 aa).

Positions 1–211 (MVDKNIYIIQ…EPKSYVGTNM (211 aa)) are DCB (dimerization and cyclophiln-binding); DCB:DCB domain and DCB:HUS domain interaction. Positions 1–378 (MVDKNIYIIQ…SVHDMDYVNP (378 aa)) are interaction with RAB1B. Disordered stretches follow at residues 215 to 256 (KMRA…NGAT) and 291 to 370 (DSGL…SASV). A compositionally biased stretch (basic residues) spans 227 to 241 (WKKQKRSPRPPRHMT). Over residues 316–328 (RESTTTESGSNEI) the composition is skewed to polar residues. Phosphoserine is present on residues S349 and S352. T505 carries the post-translational modification Phosphothreonine. Positions 528-548 (RIPSFVTELYINYDCDYYCAN) are HUS (homology upstream of Sec7); DCB:HUS domain interaction. Positions 601-626 (QEKKETSRPSYEAVDSTQEANSTERA) are disordered. The span at 615–625 (DSTQEANSTER) shows a compositional bias: polar residues. The SEC7 domain occupies 690 to 880 (ELIEIKNKKK…EDMYHAIKNE (191 aa)). Residues 884 to 1370 (MPEEQTGLVR…LSRPSPSPLV (487 aa)) are phosphatidylinositol-phosphate binding; required for translocation to the leading edge and for ARF1 activation upon GPCR signaling. Low complexity predominate over residues 1284 to 1294 (TARADAPDAGA). Positions 1284–1333 (TARADAPDAGAQSDSELPSYHQNDVSLDRGYTSDSEVYTDHGRPGKIHRS) are disordered. A compositionally biased stretch (polar residues) spans 1295–1308 (QSDSELPSYHQNDV). Phosphoserine is present on S1296. The residue at position 1314 (Y1314) is a Phosphotyrosine. Phosphoserine is present on residues S1316, S1318, and S1333. A Phosphothreonine; by AMPK modification is found at T1335. Disordered regions lie at residues 1430-1484 (CKSQ…EGVP), 1739-1806 (THLT…PPLI), and 1837-1856 (PVPL…SEVN). Over residues 1432 to 1446 (SQDKRGKSHKYDSKG) the composition is skewed to basic and acidic residues. S1475 and S1781 each carry phosphoserine. The segment covering 1775-1793 (SSSSPGSPVASSPSRLSPS) has biased composition (low complexity).

As to quaternary structure, can form homodimers and probably homotetramers. Interacts with COPG1; the interaction is independent on ARF1 activation. Interacts with ARF1, ARF3, ARF4 and ARF5. Interacts with RAB1B (GTP-bound form); required for GBF1 membrane association. Interacts with GGA1, GGA2 and GGA3. Interacts with USO1. Interacts (via SEC7 domain) with PNPLA2 (via C-terminus); the interaction is direct. Can form homodimers and probably homotetramers. Interacts with COPG1; the interaction is independent on ARF1 activation. Interacts with ARF1, ARF3, ARF4 and ARF5. Interacts with RAB1B (GTP-bound form); required for GBF1 membrane association. Interacts with GGA1, GGA2 and GGA3. Interacts with USO1. Interacts (via SEC7 domain) with PNPLA2 (via C-terminus); the interaction is direct. Interacts with ARMH3.

It is found in the golgi apparatus. The protein localises to the cis-Golgi network. The protein resides in the endoplasmic reticulum-Golgi intermediate compartment. It localises to the trans-Golgi network. Its subcellular location is the cytoplasm. It is found in the lipid droplet. The protein localises to the membrane. Inhibited by brefeldin A (BFA). Inhibited by golgicide A (GCA). Its function is as follows. Guanine-nucleotide exchange factor (GEF) for members of the Arf family of small GTPases involved in trafficking in the early secretory pathway; its GEF activity initiates the coating of nascent vesicles via the localized generation of activated ARFs through replacement of GDP with GTP. Recruitment to cis-Golgi membranes requires membrane association of Arf-GDP and can be regulated by ARF1, ARF3, ARF4 and ARF5. Involved in the recruitment of the COPI coat complex to cellular membranes such as the endoplasmic reticulum exit sites (ERES), and the endoplasmic reticulum-Golgi intermediate (ERGIC) and cis-Golgi compartments implicating ARF1 activation. Involved in COPI vesicle-dependent retrograde transport from the ERGIC and cis-Golgi compartments to the endoplasmic reticulum (ER). Involved in the trans-Golgi network recruitment of GGA1, GGA2, GGA3, BIG1, BIG2, and the AP-1 adaptor protein complex related to chlathrin-dependent transport; the function requires its GEF activity (probably at least in part on ARF4 and ARF5). Has GEF activity towards ARF1. Has in vitro GEF activity towards ARF5. Involved in the processing of PSAP. Required for the assembly of the Golgi apparatus. The AMPK-phosphorylated form is involved in Golgi disassembly during mitotis and under stress conditions. May be involved in the COPI vesicle-dependent recruitment of PNPLA2 to lipid droplets. In neutrophils, involved in G protein-coupled receptor (GPCR)-mediated chemotaxis und superoxide production. Proposed to be recruited by phosphatidylinositol-phosphates generated upon GPCR stimulation to the leading edge where it recruits and activates ARF1, and is involved in recruitment of GIT2 and the NADPH oxidase complex. Plays a role in maintaining mitochondrial morphology. The polypeptide is Golgi-specific brefeldin A-resistance guanine nucleotide exchange factor 1 (GBF1) (Cricetulus griseus (Chinese hamster)).